Reading from the N-terminus, the 109-residue chain is Thiosulfate sulfurtransferase GlpE (109 aa).

The Rhodanese domain maps to 17-105; that stretch reads HQQTAVLVDI…WHRHFPAEVA (89 aa). The active-site Cysteine persulfide intermediate is Cys65.

This sequence belongs to the GlpE family.

The protein resides in the cytoplasm. The enzyme catalyses thiosulfate + hydrogen cyanide = thiocyanate + sulfite + 2 H(+). The catalysed reaction is thiosulfate + [thioredoxin]-dithiol = [thioredoxin]-disulfide + hydrogen sulfide + sulfite + 2 H(+). Functionally, transferase that catalyzes the transfer of sulfur from thiosulfate to thiophilic acceptors such as cyanide or dithiols. May function in a CysM-independent thiosulfate assimilation pathway by catalyzing the conversion of thiosulfate to sulfite, which can then be used for L-cysteine biosynthesis. This Klebsiella pneumoniae (strain 342) protein is Thiosulfate sulfurtransferase GlpE.